Reading from the N-terminus, the 58-residue chain is Small ribosomal subunit protein bS21 (58 aa).

The segment at arginine 35 to lysine 58 is disordered. A compositionally biased stretch (basic residues) spans valine 43–lysine 58.

This sequence belongs to the bacterial ribosomal protein bS21 family.

The polypeptide is Small ribosomal subunit protein bS21 (Acetivibrio thermocellus (strain ATCC 27405 / DSM 1237 / JCM 9322 / NBRC 103400 / NCIMB 10682 / NRRL B-4536 / VPI 7372) (Clostridium thermocellum)).